A 1725-amino-acid polypeptide reads, in one-letter code: Latrophilin Cirl (1725 aa).

At 1–757 the chain is on the extracellular side; the sequence is MALNELGNCA…LFTMFDGNMR (757 aa). In terms of domain architecture, SUEL-type lectin spans 18–107; that stretch reads ACEGKQLTIE…KYLEAHYQCI (90 aa). N-linked (GlcNAc...) asparagine glycosylation is present at Asn-135. The tract at residues 164-284 is disordered; sequence AVQPTHSTPS…SAANNSVNIG (121 aa). Low complexity-rich tracts occupy residues 167–176 and 224–236; these read PTHSTPSSST and SSSSSSNSGSAGN. Asn-236, Asn-278, Asn-326, Asn-388, Asn-645, Asn-693, and Asn-720 each carry an N-linked (GlcNAc...) asparagine glycan. Over residues 259-282 the composition is skewed to polar residues; it reads LLTTKSSPNRTPGTTASAANNSVN. Residues 361 to 390 are disordered; sequence DDEYDDDLPAASSTTPQPSNNGGDCVHNSS. Polar residues predominate over residues 371 to 390; it reads ASSTTPQPSNNGGDCVHNSS. The GAIN-B domain occupies 551–744; it reads RNVVQKVKNI…AILMDVVDEH (194 aa). 2 disulfides stabilise this stretch: Cys-699–Cys-726 and Cys-714–Cys-728. The tract at residues 699–744 is GPS; that stretch reads CVFWNYIDHAWSANGCSLESTNRTHSVCSCNHLTNFAILMDVVDEH. Residues 758–778 traverse the membrane as a helical segment; that stretch reads IFIYISVAICVVFIIIALLTL. At 779–791 the chain is on the cytoplasmic side; it reads KLFNGVFVKSART. A helical transmembrane segment spans residues 792-812; that stretch reads SIYSSIYICLLAIELLFLLGI. Residues 813–818 lie on the Extracellular side of the membrane; that stretch reads EQTETS. Residues 819–839 form a helical membrane-spanning segment; the sequence is IFCGFITVFLHCAILSGTAWF. At 840–865 the chain is on the cytoplasmic side; the sequence is CYEAFHSYSTLTSDELLLEVDQTPKV. The chain crosses the membrane as a helical span at residues 866–886; sequence NCYYLLSYGLSLSVVAISLVI. At 887–910 the chain is on the extracellular side; that stretch reads DPSTYTQNDYCVLMEANALFYSTF. A helical transmembrane segment spans residues 911–931; sequence VAPVLIFFVAAITYTFLSWII. Residues 932–958 lie on the Cytoplasmic side of the membrane; sequence MRRKSRTALKTKEHTRLANVRFDIRCS. Residues 959–979 form a helical membrane-spanning segment; sequence FVFLLLLSVVWCCAYFYLRGA. The Extracellular segment spans residues 980 to 986; sequence KLDEDGA. A helical membrane pass occupies residues 987–1007; sequence PIYGYCFICFNTLLGIYIFVF. At 1008–1725 the chain is on the cytoplasmic side; sequence HCIQNEKIRR…VRCYLEPLAK (718 aa). A disordered region spans residues 1056 to 1088; it reads TANQSAGTLSKSKSKLPLGAGDEARDGDAQQQQ. Position 1153 is a phosphoserine (Ser-1153). 4 disordered regions span residues 1236–1263, 1309–1337, 1472–1555, and 1636–1705; these read HNNQHGKKKRGGGAGAVPASPSGSLHSR, QQLQQQQLRQQRQQQQQQLSSDEEQAEQH, GGGS…SDER, and LFGH…QARH. Basic residues predominate over residues 1237 to 1246; it reads NNQHGKKKRG. Residues Ser-1255 and Ser-1262 each carry the phosphoserine modification. Over residues 1309-1327 the composition is skewed to low complexity; sequence QQLQQQQLRQQRQQQQQQL. Residues Ser-1328 and Ser-1329 each carry the phosphoserine modification. The span at 1478–1496 shows a compositional bias: low complexity; the sequence is GGSVTSRSQQQQQQQLKQK. Composition is skewed to acidic residues over residues 1505–1522 and 1532–1543; these read DDDDDDDDDDDEYDDEVT and CDDEDNESDIDD. Polar residues predominate over residues 1651–1666; sequence QTPAQKRQQLQKLSPQ. Low complexity predominate over residues 1667–1683; that stretch reads STTSSSSHTSHSNPQHA. The span at 1684–1693 shows a compositional bias: basic residues; that stretch reads PAHHLQHHHT. Residues 1694–1705 show a composition bias toward low complexity; sequence QQQQQQQQQARH.

The protein belongs to the G-protein coupled receptor 2 family. LN-TM7 subfamily. Forms a heterodimer, consisting of a large extracellular region non-covalently linked to a seven-transmembrane moiety. Post-translationally, proteolytically cleaved into 2 subunits, an extracellular subunit and a seven-transmembrane subunit.

It is found in the cell membrane. The polypeptide is Latrophilin Cirl (Drosophila mojavensis (Fruit fly)).